Consider the following 583-residue polypeptide: MASTSTEVFPFKDQELSTQLLFQLNILRQEQIFTDVILCTEDKEIPCHRNVLVSSSPYFRAMFCSNFRESSQARVDLKGIASEVIECVVDYIYTGSITITMELVLPLMQAASMLQYGRLFEACSTFLQEQLNPENCLSMIRLSEILHCETLKERAKEMAVRCFSDVAASEDFCELTLPELMCYLEDDRLCAEEEQVFETLLAWIHHDPFSRRGAIHDLFKKVRLRFIHPTYLFQFIANDPLVQSSTLCTEIIESVRRLMFSVSAKCTKELKPLWTTPRRYTCRETLVVVGGRKNNEQTSREALLYDERTQRWQWLAKLPLRLYKAAYVCIHSILYVVGGLSLSLVSGDSAVSATVYTLSLKTNQWRTAEPMLEPRYAHQCVSYLHFIFALGGIGQDKQISNTVERYNSMFNQWEVMAPMPTAVLHPAVAANDQRIYVFGGEDALQNPVRLIQVYHISRNLWSRLETRTVKNVCAPAAVIEDKIYIVGGYTRRVIAYDTKANKFVKCTNMKERRMHHAATVINNKLYVTGGRFLNSHDVIEDSDCFECYDPKTDVWTSKGSLPYKLFDHGSLPLICVSNRPNPP.

A BTB domain is found at 34–101; the sequence is TDVILCTEDK…IYTGSITITM (68 aa). A BACK domain is found at 136 to 237; that stretch reads CLSMIRLSEI…HPTYLFQFIA (102 aa). Kelch repeat units lie at residues 285–332, 333–385, 386–433, 435–481, 482–523, and 525–575; these read TLVV…CIHS, ILYV…SYLH, FIFA…ANDQ, IYVF…VIED, KIYI…VINN, and LYVT…PLIC.

The polypeptide is Kelch-like protein 38 (klhl38) (Danio rerio (Zebrafish)).